The primary structure comprises 141 residues: Nucleoside diphosphate kinase (141 aa).

The ATP site is built by lysine 11, phenylalanine 59, arginine 87, threonine 93, arginine 104, and asparagine 114. Histidine 117 serves as the catalytic Pros-phosphohistidine intermediate.

It belongs to the NDK family. In terms of assembly, homotetramer. The cofactor is Mg(2+).

The protein localises to the cytoplasm. The catalysed reaction is a 2'-deoxyribonucleoside 5'-diphosphate + ATP = a 2'-deoxyribonucleoside 5'-triphosphate + ADP. It catalyses the reaction a ribonucleoside 5'-diphosphate + ATP = a ribonucleoside 5'-triphosphate + ADP. Major role in the synthesis of nucleoside triphosphates other than ATP. The ATP gamma phosphate is transferred to the NDP beta phosphate via a ping-pong mechanism, using a phosphorylated active-site intermediate. This is Nucleoside diphosphate kinase from Cupriavidus taiwanensis (strain DSM 17343 / BCRC 17206 / CCUG 44338 / CIP 107171 / LMG 19424 / R1) (Ralstonia taiwanensis (strain LMG 19424)).